Here is a 51-residue protein sequence, read N- to C-terminus: Large ribosomal subunit protein eL39 (51 aa).

Belongs to the eukaryotic ribosomal protein eL39 family. As to quaternary structure, interacts with YIH1.

The sequence is that of Large ribosomal subunit protein eL39 (RPL39) from Kluyveromyces lactis (strain ATCC 8585 / CBS 2359 / DSM 70799 / NBRC 1267 / NRRL Y-1140 / WM37) (Yeast).